A 131-amino-acid chain; its full sequence is Small ribosomal subunit protein bS6 (131 aa).

The tract at residues 94-131 is disordered; sequence DAVTEESQLAKNADEKRARKATTRRPDSNDDNDNHSDD. Over residues 117–131 the composition is skewed to basic and acidic residues; the sequence is RRPDSNDDNDNHSDD.

Belongs to the bacterial ribosomal protein bS6 family.

In terms of biological role, binds together with bS18 to 16S ribosomal RNA. The chain is Small ribosomal subunit protein bS6 from Psychrobacter cryohalolentis (strain ATCC BAA-1226 / DSM 17306 / VKM B-2378 / K5).